The chain runs to 502 residues: TGF-beta-activated kinase 1 and MAP3K7-binding protein 1 (502 aa).

The tract at residues 1 to 21 (MAAQRRSLLQSEQQPSWTDDL) is disordered. Ser7 carries the post-translational modification Phosphoserine. Residues 7-17 (SLLQSEQQPSW) show a composition bias toward polar residues. Positions 28 to 365 (GVGSASNRSY…EDMTLLVRNF (338 aa)) constitute a PPM-type phosphatase domain. Ser393 carries an O-linked (GlcNAc) serine glycan. The span at 414–437 (QMVNGSHSASTLDEATPTLTNQSP) shows a compositional bias: polar residues. The interval 414–476 (QMVNGSHSAS…SLPPGEDGRV (63 aa)) is disordered. Ser421 carries the phosphoserine modification. Residue Thr429 is modified to Phosphothreonine. The residue at position 436 (Ser436) is a Phosphoserine. Residues 438 to 455 (TLTLQSTNTHTQSSSSSS) show a composition bias toward low complexity. The residue at position 440 (Thr440) is a Phosphothreonine.

As to quaternary structure, interacts with XIAP and BIRC7. Interacts with TRAF6 and MAP3K7; during IL-1 signaling. Identified in the TRIKA2 complex composed of MAP3K7, TAB1 and TAB2. Interacts with TRAF6 and MAPK14; these interactions allow MAPK14 autophosphorylation. Interacts with STING1; interaction takes place following cGAMP activation and promotes TAB1 recruitment to the endoplasmic reticulum, triggering MAP3K7/TAK1 activation and STING1 phosphorylation. In terms of processing, phosphorylated at all three sites Ser-421, Thr-429 and Ser-436 by MAPK14 when cells were exposed to cellular stresses, or stimulated with TNF-alpha, IL1 or LPS. These phosphorylations inhibit TAK1 activation by a feedback control mechanism. Dephosphorylated by DUSP14 at Ser-436, leading to TAB1-MAP3K7/TAK1 complex inactivation in T-cells. Ubiquitinated by MAP3K1 with 'Lys-63'-linked polyubiquitin; leading to activation of TAK1 and of JNK and p38 MAP kinases following EGF and TGF-beta stimulation. Ubiquitinated by ITCH with 'Lys-48'-linked polyubiquitin; leading to proteasomal degradation. Ubiquitinated by RNF114 during maternal-to-zygotic transition; leading to degradation. Post-translationally, O-GlcNAcylated at Ser-393 is required for full MAP3K7/TAK1 activation upon stimulation with IL-1 or osmotic stress.

The protein localises to the cytoplasm. It localises to the cytosol. The protein resides in the endoplasmic reticulum membrane. In terms of biological role, key adapter protein that plays an essential role in JNK and NF-kappa-B activation and proinflammatory cytokines production in response to stimulation with TLRs and cytokines. Mechanistically, associates with the catalytic domain of MAP3K7/TAK1 to trigger MAP3K7/TAK1 autophosphorylation leading to its full activation. Similarly, associates with MAPK14 and triggers its autophosphorylation and subsequent activation. In turn, MAPK14 phosphorylates TAB1 and inhibits MAP3K7/TAK1 activation in a feedback control mechanism. Also plays a role in recruiting MAPK14 to the TAK1 complex for the phosphorylation of the TAB2 and TAB3 regulatory subunits. This chain is TGF-beta-activated kinase 1 and MAP3K7-binding protein 1 (Tab1), found in Mus musculus (Mouse).